The following is a 610-amino-acid chain: Protein Spindly-B (610 aa).

The stretch at 1-392 forms a coiled coil; that stretch reads MEESETVLKL…IDKVKDELSL (392 aa). The interval 474 to 610 is disordered; that stretch reads TEAHGVSDAT…KPATAQCPQQ (137 aa). Composition is skewed to basic and acidic residues over residues 493–511 and 535–548; these read SDDKKLPKEDLSLSTKDQD and RIMEDEKDTPDLNK. Residues 549 to 561 are compositionally biased toward polar residues; that stretch reads RNPNNCTITSIHP. Residues 570 to 583 show a composition bias toward basic and acidic residues; that stretch reads SELKKVDEEQEKRK.

Belongs to the Spindly family.

Its subcellular location is the chromosome. It localises to the centromere. It is found in the kinetochore. Its function is as follows. Required for the localization of dynein and dynactin to the mitotic kintochore. Dynein is believed to control the initial lateral interaction between the kinetochore and spindle microtubules and to facilitate the subsequent formation of end-on kinetochore-microtubule attachments mediated by the NDC80 complex. The protein is Protein Spindly-B (spdl1-b) of Xenopus laevis (African clawed frog).